The primary structure comprises 137 residues: DNA-directed RNA polymerase subunit omega (137 aa).

The interval Asp78–Asp137 is disordered. The segment covering Ala84 to Ser103 has biased composition (low complexity). The span at Gln110–Arg121 shows a compositional bias: basic and acidic residues.

It belongs to the RNA polymerase subunit omega family. As to quaternary structure, the RNAP catalytic core consists of 2 alpha, 1 beta, 1 beta' and 1 omega subunit. When a sigma factor is associated with the core the holoenzyme is formed, which can initiate transcription.

It catalyses the reaction RNA(n) + a ribonucleoside 5'-triphosphate = RNA(n+1) + diphosphate. Functionally, promotes RNA polymerase assembly. Latches the N- and C-terminal regions of the beta' subunit thereby facilitating its interaction with the beta and alpha subunits. The polypeptide is DNA-directed RNA polymerase subunit omega (Methylobacterium sp. (strain 4-46)).